The following is a 365-amino-acid chain: Succinyl-diaminopimelate desuccinylase (365 aa).

Residue His-64 participates in Zn(2+) binding. Asp-66 is a catalytic residue. Asp-95 lines the Zn(2+) pocket. Glu-125 functions as the Proton acceptor in the catalytic mechanism. The Zn(2+) site is built by Glu-126, Glu-154, and His-339.

It belongs to the peptidase M20A family. DapE subfamily. As to quaternary structure, homodimer. Requires Zn(2+) as cofactor. The cofactor is Co(2+).

The catalysed reaction is N-succinyl-(2S,6S)-2,6-diaminopimelate + H2O = (2S,6S)-2,6-diaminopimelate + succinate. Its pathway is amino-acid biosynthesis; L-lysine biosynthesis via DAP pathway; LL-2,6-diaminopimelate from (S)-tetrahydrodipicolinate (succinylase route): step 3/3. Catalyzes the hydrolysis of N-succinyl-L,L-diaminopimelic acid (SDAP), forming succinate and LL-2,6-diaminopimelate (DAP), an intermediate involved in the bacterial biosynthesis of lysine and meso-diaminopimelic acid, an essential component of bacterial cell walls. The chain is Succinyl-diaminopimelate desuccinylase from Campylobacter fetus subsp. fetus (strain 82-40).